We begin with the raw amino-acid sequence, 141 residues long: LOB domain-containing protein 34 (141 aa).

One can recognise an LOB domain in the interval 16-119 (NQCAACRHQR…SPLNYVAPVI (104 aa)).

It belongs to the LOB domain-containing protein family.

The sequence is that of LOB domain-containing protein 34 (LBD34) from Arabidopsis thaliana (Mouse-ear cress).